A 305-amino-acid chain; its full sequence is Phosphatidate cytidylyltransferase (305 aa).

8 helical membrane passes run 27–47, 67–87, 96–116, 124–144, 150–170, 202–222, 232–252, and 277–297; these read FLVI…VGLL, FPFS…ALTC, FPEH…IRLV, LGPI…SVPI, ILYG…AIFL, TVVG…LFYS, IAVP…GFFG, and MLDV…ILLI.

It belongs to the CDS family.

It is found in the cell membrane. The catalysed reaction is a 1,2-diacyl-sn-glycero-3-phosphate + CTP + H(+) = a CDP-1,2-diacyl-sn-glycerol + diphosphate. It participates in phospholipid metabolism; CDP-diacylglycerol biosynthesis; CDP-diacylglycerol from sn-glycerol 3-phosphate: step 3/3. This chain is Phosphatidate cytidylyltransferase (cdsA), found in Chlamydia trachomatis serovar D (strain ATCC VR-885 / DSM 19411 / UW-3/Cx).